An 806-amino-acid polypeptide reads, in one-letter code: Minor extracellular protease Vpr (806 aa).

The N-terminal stretch at 1–28 is a signal peptide; it reads MKKGIIRFLLVSFVLFFALSTGITGVQA. The propeptide occupies 29–160; the sequence is APASSKTSAD…TISEDAVSPQ (132 aa). The Inhibitor I9 domain maps to 57 to 142; the sequence is TVIVELKEKS…AVYPNVTYKT (86 aa). The Peptidase S8 domain maps to 158–597; the sequence is SPQMDDSAPY…ARIMNAIKAD (440 aa). Active-site charge relay system residues include Asp189 and His233. The region spanning 383–461 is the PA domain; it reads ELVEAGIGEA…KLSLEDGEKL (79 aa). Ser534 acts as the Charge relay system in catalysis.

It belongs to the peptidase S8 family. Probably undergoes C-terminal processing or proteolysis. Auto-processed to form active enzymes of several different molecular weights.

The protein localises to the secreted. It localises to the cell wall. Activity is inhibited by phenylmethylsulfonyl fluoride (PMSF), but not by EDTA. Serine protease. Involved in the production of the competence and sporulation stimulating factor CSF. Is directly involved in the processing of pro-CSF to CSF. Can also cleave pro-PhrA to PhrA, but cannot cleave pro-PhrE. Shows fibrinolytic activity in vitro. Not essential for growth or sporulation. In Bacillus subtilis (strain 168), this protein is Minor extracellular protease Vpr.